The following is a 247-amino-acid chain: Mast cell protease 2 (247 aa).

An N-terminal signal peptide occupies residues 1–18 (MQALLFLMALLLPSGAGA). A propeptide spans 19–20 (EE) (activation peptide). Residues 21 to 244 (IIGGVESIPH…YVPWINAVIN (224 aa)) enclose the Peptidase S1 domain. Cysteine 50 and cysteine 66 are oxidised to a cystine. Residues histidine 65 and aspartate 109 each act as charge relay system in the active site. Intrachain disulfides connect cysteine 143–cysteine 208 and cysteine 174–cysteine 187. The active-site Charge relay system is serine 202.

It belongs to the peptidase S1 family. Granzyme subfamily.

Functionally, this enzyme, isolated from small intestine, specifically inactivates the apo forms of a certain group of intracellular pyridoxal phosphate-requiring enzymes. It has chymotrypsin-like specificity towards small substrates. The polypeptide is Mast cell protease 2 (Mcpt2) (Rattus norvegicus (Rat)).